A 157-amino-acid polypeptide reads, in one-letter code: SsrA-binding protein (157 aa).

It belongs to the SmpB family.

The protein localises to the cytoplasm. Required for rescue of stalled ribosomes mediated by trans-translation. Binds to transfer-messenger RNA (tmRNA), required for stable association of tmRNA with ribosomes. tmRNA and SmpB together mimic tRNA shape, replacing the anticodon stem-loop with SmpB. tmRNA is encoded by the ssrA gene; the 2 termini fold to resemble tRNA(Ala) and it encodes a 'tag peptide', a short internal open reading frame. During trans-translation Ala-aminoacylated tmRNA acts like a tRNA, entering the A-site of stalled ribosomes, displacing the stalled mRNA. The ribosome then switches to translate the ORF on the tmRNA; the nascent peptide is terminated with the 'tag peptide' encoded by the tmRNA and targeted for degradation. The ribosome is freed to recommence translation, which seems to be the essential function of trans-translation. This is SsrA-binding protein from Methylobacterium nodulans (strain LMG 21967 / CNCM I-2342 / ORS 2060).